The following is a 252-amino-acid chain: Urease accessory protein UreD (252 aa).

This sequence belongs to the UreD family. UreD, UreF and UreG form a complex that acts as a GTP-hydrolysis-dependent molecular chaperone, activating the urease apoprotein by helping to assemble the nickel containing metallocenter of UreC. The UreE protein probably delivers the nickel.

It localises to the cytoplasm. Required for maturation of urease via the functional incorporation of the urease nickel metallocenter. This chain is Urease accessory protein UreD, found in Streptomyces avermitilis (strain ATCC 31267 / DSM 46492 / JCM 5070 / NBRC 14893 / NCIMB 12804 / NRRL 8165 / MA-4680).